The following is a 336-amino-acid chain: Large ribosomal subunit protein uL3 (336 aa).

3 disordered regions span residues Met-1–Ala-43, Ile-205–Gln-230, and Arg-311–Gly-336. Positions Gly-219 to Gln-230 are enriched in basic residues.

It belongs to the universal ribosomal protein uL3 family. Part of the 50S ribosomal subunit. Forms a cluster with proteins L14 and L24e.

Functionally, one of the primary rRNA binding proteins, it binds directly near the 3'-end of the 23S rRNA, where it nucleates assembly of the 50S subunit. In Natronomonas pharaonis (strain ATCC 35678 / DSM 2160 / CIP 103997 / JCM 8858 / NBRC 14720 / NCIMB 2260 / Gabara) (Halobacterium pharaonis), this protein is Large ribosomal subunit protein uL3.